We begin with the raw amino-acid sequence, 23 residues long: QKLCERPSGTWSGVCGNNNACKN.

Position 1 is a pyrrolidone carboxylic acid (Gln-1).

The protein belongs to the DEFL family. As to quaternary structure, forms oligomers in its native state.

Functionally, possesses antifungal activity sensitive to inorganic cations. The polypeptide is Defensin-like protein 2 (Brassica napus (Rape)).